The following is a 248-amino-acid chain: Probable pyridoxal 5'-phosphate synthase subunit pdx2 (248 aa).

Position 70 to 72 (70 to 72) interacts with L-glutamine; that stretch reads GES. C106 serves as the catalytic Nucleophile. Residues R136 and 174–175 each bind L-glutamine; that span reads IR. Active-site charge relay system residues include H221 and E223.

This sequence belongs to the glutaminase PdxT/SNO family.

It catalyses the reaction aldehydo-D-ribose 5-phosphate + D-glyceraldehyde 3-phosphate + L-glutamine = pyridoxal 5'-phosphate + L-glutamate + phosphate + 3 H2O + H(+). It carries out the reaction L-glutamine + H2O = L-glutamate + NH4(+). It functions in the pathway cofactor biosynthesis; pyridoxal 5'-phosphate biosynthesis. In terms of biological role, catalyzes the hydrolysis of glutamine to glutamate and ammonia as part of the biosynthesis of pyridoxal 5'-phosphate. The resulting ammonia molecule is channeled to the active site of pdx1. In Dictyostelium discoideum (Social amoeba), this protein is Probable pyridoxal 5'-phosphate synthase subunit pdx2.